We begin with the raw amino-acid sequence, 107 residues long: uncharacterized protein (107 aa).

The signal sequence occupies residues 1–34; sequence MRLQWPKFITFLSTGSCCLLFLLLPCSFFPLPTA.

This is an uncharacterized protein from Saccharomyces cerevisiae (strain ATCC 204508 / S288c) (Baker's yeast).